The following is a 212-amino-acid chain: Stromal cell-derived factor 2-like protein (212 aa).

Positions 1–19 (MKSLFLILILCITIPLIFA) are cleaved as a signal peptide. The N-linked (GlcNAc...) asparagine glycan is linked to N20. 3 MIR domains span residues 29-86 (ITKV…IKGP), 94-149 (GTVV…VETE), and 151-206 (GKEW…TEEG).

The protein resides in the secreted. The chain is Stromal cell-derived factor 2-like protein from Dictyostelium discoideum (Social amoeba).